The chain runs to 134 residues: Cytochrome b5 (134 aa).

The Cytochrome b5 heme-binding domain maps to 6–82 (TKTFTRAEVA…MKKYKIGELV (77 aa)). Residues H41 and H65 each coordinate heme. The interval 86-105 (RTSVAQKSEPTWSTEQQTEE) is disordered. The segment covering 87-105 (TSVAQKSEPTWSTEQQTEE) has biased composition (polar residues). Residues 111–131 (WLVPLVLCLVATLFYKFFFGG) form a helical membrane-spanning segment.

This sequence belongs to the cytochrome b5 family.

It is found in the endoplasmic reticulum membrane. The protein resides in the microsome membrane. Its function is as follows. Cytochrome b5 is a membrane-bound hemoprotein which functions as an electron carrier for several membrane-bound oxygenases. This Drosophila melanogaster (Fruit fly) protein is Cytochrome b5 (Cyt-b5).